The sequence spans 249 residues: Adenylate kinase (249 aa).

43–48 serves as a coordination point for ATP; that stretch reads GAGKGT. An NMP region spans residues 63-92; it reads ATGDMLRAQVAAKTALGVEAKKIMDQGGLV. AMP-binding positions include T64, R69, 90–92, 119–122, and Q126; these read GLV and GFPR. Positions 160–197 are LID; the sequence is GRLVHPASGRSYHKLFNPPKKDMTDDVTGEPLVQRSDD. ATP is bound by residues R161 and 170 to 171; that span reads SY. The tract at residues 177 to 197 is disordered; sequence PPKKDMTDDVTGEPLVQRSDD. The AMP site is built by R194 and R205. Q233 is an ATP binding site.

Belongs to the adenylate kinase family. AK2 subfamily. As to quaternary structure, monomer.

It localises to the cytoplasm. It is found in the cytosol. Its subcellular location is the mitochondrion intermembrane space. The enzyme catalyses AMP + ATP = 2 ADP. Catalyzes the reversible transfer of the terminal phosphate group between ATP and AMP. Plays an important role in cellular energy homeostasis and in adenine nucleotide metabolism. Adenylate kinase activity is critical for regulation of the phosphate utilization and the AMP de novo biosynthesis pathways. The chain is Adenylate kinase from Candida albicans (strain SC5314 / ATCC MYA-2876) (Yeast).